A 287-amino-acid polypeptide reads, in one-letter code: uncharacterized protein (287 aa).

The 107-residue stretch at 133–239 folds into the THUMP domain; it reads CEVGKTKKMT…KNIIGISIVQ (107 aa). The interval 257 to 287 is disordered; the sequence is ENTKSIPNDSKLDNFDRDKNQIINDKAEHAE. The segment covering 266 to 287 has biased composition (basic and acidic residues); that stretch reads SKLDNFDRDKNQIINDKAEHAE.

This is an uncharacterized protein from Schizosaccharomyces pombe (strain 972 / ATCC 24843) (Fission yeast).